We begin with the raw amino-acid sequence, 288 residues long: Small ribosomal subunit protein uS2 (288 aa).

A disordered region spans residues 228-288 (RAGLSSDKDA…PAAEAPSTEA (61 aa)). Positions 257–288 (QAAPAAEAAPAAEAQAAPAAEAPAAEAPSTEA) are enriched in low complexity.

This sequence belongs to the universal ribosomal protein uS2 family.

This Rhodococcus opacus (strain B4) protein is Small ribosomal subunit protein uS2.